The primary structure comprises 787 residues: Phenylalanine--tRNA ligase beta subunit (787 aa).

The region spanning 39 to 149 (APAFSGVVVA…EDAPVGTNIR (111 aa)) is the tRNA-binding domain. In terms of domain architecture, B5 spans 400–475 (PEAKQVGLRL…RVYGYENIPD (76 aa)). Mg(2+) is bound by residues Asp453, Asp459, Glu462, and Glu463. Residues 694–786 (SKFQPVRRDL…VATEAGARLR (93 aa)) form the FDX-ACB domain.

The protein belongs to the phenylalanyl-tRNA synthetase beta subunit family. Type 1 subfamily. Tetramer of two alpha and two beta subunits. Requires Mg(2+) as cofactor.

It localises to the cytoplasm. It carries out the reaction tRNA(Phe) + L-phenylalanine + ATP = L-phenylalanyl-tRNA(Phe) + AMP + diphosphate + H(+). This chain is Phenylalanine--tRNA ligase beta subunit, found in Neisseria gonorrhoeae (strain ATCC 700825 / FA 1090).